The primary structure comprises 778 residues: uncharacterized protein (778 aa).

Residues 1 to 92 (MSFVIAVPEA…GARSYVVAEA (92 aa)) enclose the PE domain. Disordered regions lie at residues 125-163 (ADGT…AGLI), 372-510 (TGLA…GDAF), and 718-778 (QGGL…GADG). 3 stretches are compositionally biased toward gly residues: residues 402–429 (NQTG…GGLG), 436–510 (DGTG…GDAF), and 718–763 (QGGL…GSSG).

It belongs to the mycobacterial PE family. PGRS subfamily.

This is an uncharacterized protein from Mycobacterium tuberculosis (strain CDC 1551 / Oshkosh).